A 151-amino-acid chain; its full sequence is Mating pheromone 3 (151 aa).

Positions 1 to 16 (MKAIFIILAILMVTQA) are cleaved as a signal peptide. Positions 17–52 (FKMTSKVNTKLQSQIQSKFQSKNKLASTFQTSSQLK) are excised as a propeptide.

It is found in the secreted. In terms of biological role, mating ciliate pheromones (or gamones) are diffusible extracellular communication signals that distinguish different intraspecific classes of cells commonly referred to as 'mating types'. They prepare the latter for conjugation by changing their cell surface properties. The protein is Mating pheromone 3 (PHR3) of Euplotoides octocarinatus (Freshwater ciliate).